Here is a 184-residue protein sequence, read N- to C-terminus: Ribonuclease HII (184 aa).

One can recognise an RNase H type-2 domain in the interval 2–184; sequence AKICGIDEAG…KPKLAQSSLF (183 aa). Residues aspartate 8, glutamate 9, and aspartate 95 each contribute to the a divalent metal cation site.

It belongs to the RNase HII family. Requires Mn(2+) as cofactor. It depends on Mg(2+) as a cofactor.

The protein resides in the cytoplasm. The catalysed reaction is Endonucleolytic cleavage to 5'-phosphomonoester.. Its function is as follows. Endonuclease that specifically degrades the RNA of RNA-DNA hybrids. The sequence is that of Ribonuclease HII from Campylobacter concisus (strain 13826).